The chain runs to 160 residues: Protein-export protein SecB (160 aa).

It belongs to the SecB family. As to quaternary structure, homotetramer, a dimer of dimers. One homotetramer interacts with 1 SecA dimer.

It localises to the cytoplasm. One of the proteins required for the normal export of preproteins out of the cell cytoplasm. It is a molecular chaperone that binds to a subset of precursor proteins, maintaining them in a translocation-competent state. It also specifically binds to its receptor SecA. The chain is Protein-export protein SecB from Nitrosomonas eutropha (strain DSM 101675 / C91 / Nm57).